Consider the following 30-residue polypeptide: Snake venom serine protease (30 aa).

The 30-residue stretch at 1 to 30 folds into the Peptidase S1 domain; it reads VIGGDECNINEHRFLVALYDPDGFLSGGIL.

The protein belongs to the peptidase S1 family. Snake venom subfamily. Monomer. Post-translationally, N-Glycosylated. In terms of tissue distribution, expressed by the venom gland.

Its subcellular location is the secreted. Inhibited by diisopropylfluorophosphate (DFP). Functionally, snake venom serine protease that catalyzes the hydrolysis of arginine esters, kallikrein substrates Pro-Phe-Arg-MCA and Z-Phe-Arg-MCA. Cleaves kininogen analogs to release bradykinin. Induces contraction of the isolated rat uterus directly at high concentrations, but provokes more forceful contractions when injected in presence of bovine plasma. Shows capillary permeability-increasing activity and hypotensive activity on the anesthetized rat. This is Snake venom serine protease from Crotalus viridis viridis (Prairie rattlesnake).